The chain runs to 225 residues: Ribose-5-phosphate isomerase A (225 aa).

Residues 1–20 (MKQSGGTEAQKRRAGKQAAD) form a disordered region. Residues 32-35 (TGST), 86-89 (DGAD), and 98-101 (KGGG) each bind substrate. The active-site Proton acceptor is glutamate 107. Lysine 125 contributes to the substrate binding site.

This sequence belongs to the ribose 5-phosphate isomerase family. In terms of assembly, homodimer.

It catalyses the reaction aldehydo-D-ribose 5-phosphate = D-ribulose 5-phosphate. It participates in carbohydrate degradation; pentose phosphate pathway; D-ribose 5-phosphate from D-ribulose 5-phosphate (non-oxidative stage): step 1/1. Its function is as follows. Catalyzes the reversible conversion of ribose-5-phosphate to ribulose 5-phosphate. This is Ribose-5-phosphate isomerase A from Natronomonas pharaonis (strain ATCC 35678 / DSM 2160 / CIP 103997 / JCM 8858 / NBRC 14720 / NCIMB 2260 / Gabara) (Halobacterium pharaonis).